Consider the following 388-residue polypeptide: Endoglucanase 3 (388 aa).

An N-terminal signal peptide occupies residues 1–16 (MKHSVLAGLFATGALA). A CBM1 domain is found at 17-52 (QGGAWQQCGGVGFSGSTSCVSGYTCVYLNDWYSQCQ). Cystine bridges form between Cys-24-Cys-41 and Cys-35-Cys-51. A linker region spans residues 53–91 (PQPTTLRTTTTPGATSTTRSAPAATSTTPAKGKFKWFGI). The segment at 56-81 (TTLRTTTTPGATSTTRSAPAATSTTP) is disordered. N-linked (GlcNAc...) asparagine glycosylation is found at Asn-92 and Asn-155. A catalytic region spans residues 92–388 (NQSCAEFGKG…YNSLLKKYVP (297 aa)). Glu-215 (proton donor) is an active-site residue. N-linked (GlcNAc...) asparagine glycosylation occurs at Asn-259. The active-site Nucleophile is Glu-322.

It belongs to the glycosyl hydrolase 5 (cellulase A) family.

The enzyme catalyses Endohydrolysis of (1-&gt;4)-beta-D-glucosidic linkages in cellulose, lichenin and cereal beta-D-glucans.. The sequence is that of Endoglucanase 3 (CMC3) from Humicola insolens (Soft-rot fungus).